The primary structure comprises 503 residues: MLKRFVNSIWEICQKDKFQRFTPVADAIDTFCYEPIHKSSSPPFIRDAVDVKRWMILVVVALFPATFSAIWNSGVQSLVYGSGNAQLMEAFLHISGFRSYLSFIFHDVGVFSVLWAGYKIFLPLLIISYSVGGACEVLFAVIRKHKIAEGLLVTGILYPLTLPPTIPYWMAALGIAFGVVVSKELFGGTGMNILNPALSGRAFLFFSFPAKMSGDVWVGSNPMKIKESLLAMNSTAGKSIIDGFSQSTCLHTLNSTPPSVKRVHVDAIASNILHMTHVPTQNVIQSQFSIWTESHPGLMLDKLTLEQLQSFVTSPLSEGGLGLLPTQFDSAYAITDVIYGIGKFSSGNLFWGNIVGSLGETSTFACLLGAIFLIVTGIASWRTMVSFGIGAFVTAWLFKIVSILIVGKHGAWAPARFFIPAYRQLFLGGLAFGLVFMATDPVSSPTMKLAKWIYGLFIGFMTILIRLINPAYPEGVMLAILLGNVFAPLLDYFAVRKYRRRRI.

Transmembrane regions (helical) follow at residues 55–75, 120–142, 161–181, and 186–206; these read MILV…NSGV, IFLP…FAVI, TLPP…GVVV, and FGGT…FLFF. The residue at position 248 (Thr-248) is an FMN phosphoryl threonine. Transmembrane regions (helical) follow at residues 361-381, 387-407, 417-437, 452-472, and 475-495; these read TSTF…IASW, FGIG…LIVG, FFIP…LVFM, WIYG…NPAY, and GVML…YFAV.

It belongs to the NqrB/RnfD family. As to quaternary structure, composed of six subunits; NqrA, NqrB, NqrC, NqrD, NqrE and NqrF. It depends on FMN as a cofactor.

Its subcellular location is the cell inner membrane. It catalyses the reaction a ubiquinone + n Na(+)(in) + NADH + H(+) = a ubiquinol + n Na(+)(out) + NAD(+). Functionally, NQR complex catalyzes the reduction of ubiquinone-1 to ubiquinol by two successive reactions, coupled with the transport of Na(+) ions from the cytoplasm to the periplasm. NqrA to NqrE are probably involved in the second step, the conversion of ubisemiquinone to ubiquinol. The chain is Na(+)-translocating NADH-quinone reductase subunit B from Chlamydia felis (strain Fe/C-56) (Chlamydophila felis).